The following is a 406-amino-acid chain: Plasma serine protease inhibitor (406 aa).

The N-terminal stretch at 1–19 (MQLFLLLCLVLLSPQGASL) is a signal peptide. Residues 20–25 (HRHHPR) constitute a propeptide, removed in mature form. An O-linked (GalNAc...) threonine glycan is attached at Thr-39. N-linked (GlcNAc...) asparagine glycosylation is found at Asn-249, Asn-262, and Asn-338.

Belongs to the serpin family. Forms protease inhibiting heterodimers in extracellular body fluids with serine proteases such as activated protein C/coagulation factor V/F5, acrosin/ACR, chymotrypsinogen B/CTRB1, prothrombin/F2, factor Xa/F10, factor XI/F11, kallikrein/KLKB1, tissue kallikrein, trypsin/PRSS1, prostate specific antigen/KLK3, tissue plasminogen activator/PLAT and urinary plasminogen activator/PLAU. Forms membrane-anchored serine proteases inhibiting heterodimers with TMPRSS7 and TMPRSS11E. Interacts with SEMG2. N- and O-glycosylated. N-glycosylation consists of a mixture of sialylated bi- (including sialyl-Lewis X epitopes), tri- and tetra-antennary complex-type chains; affects the maximal heparin- and thrombomodulin-enhanced rates of thrombin inhibition. O-glycosylated with core 1 or possibly core 8 glycans. Further modified with 2 sialic acid residues. Post-translationally, proteolytically cleaved. Inhibition of proteases is accompanied by formation of a stable enzyme-inhibitor complex and by degradation of the serpin to lower molecular weight derivatives. Proteolytically cleaved at the N-terminus; inhibits slightly the heparin- and thrombomodulin-enhanced rates of thrombin inhibition. In terms of tissue distribution, predominantly expressed in the epithelium of seminal vesicles. Expressed in the proximal tubular epithelium of the kidney. Expressed in the superficial and more differentiated epidermal keratinocytes of the skin. Expressed in megakaryocytes and platelets. Expressed poorly in kidney tumor cells compared to non tumor kidney tissues. Expressed in spermatozoa. Present in very high concentration in seminal plasma. Present in high concentration in plasma, synovial and Graaf follicle fluids. Present in low concentration in breast milk and in amniotic fluids. Present in very low concentration in urine, cerebrospinal fluids, saliva and tears (at protein level). Strongly expressed in liver. Expressed in kidney, spleen, pancreas, skeletal muscle, heart, testes, ovary, interstitial Leydig cells, epididymal glands, seminal vesicles and prostate.

The protein localises to the secreted. The protein resides in the extracellular space. Its activity is regulated as follows. Its inhibitory activity is greatly enhanced in the presence of glycosaminoglycans, heparin, thrombomodulin and phospholipids vesicles. In terms of biological role, heparin-dependent serine protease inhibitor acting in body fluids and secretions. Inactivates serine proteases by binding irreversibly to their serine activation site. Involved in the regulation of intravascular and extravascular proteolytic activities. Plays hemostatic roles in the blood plasma. Acts as a procoagulant and pro-inflammatory factor by inhibiting the anticoagulant activated protein C factor as well as the generation of activated protein C factor by the thrombin/thrombomodulin complex. Acts as an anticoagulant factor by inhibiting blood coagulation factors like prothrombin, factor XI, factor Xa, plasma kallikrein and fibrinolytic enzymes such as tissue- and urinary-type plasminogen activators. In seminal plasma, inactivates several serine proteases implicated in the reproductive system. Inhibits the serpin acrosin; indirectly protects component of the male genital tract from being degraded by excessive released acrosin. Inhibits tissue- and urinary-type plasminogen activator, prostate-specific antigen and kallikrein activities; has a control on the sperm motility and fertilization. Inhibits the activated protein C-catalyzed degradation of SEMG1 and SEMG2; regulates the degradation of semenogelin during the process of transfer of spermatozoa from the male reproductive tract into the female tract. In urine, inhibits urinary-type plasminogen activator and kallikrein activities. Inactivates membrane-anchored serine proteases activities such as MPRSS7 and TMPRSS11E. Inhibits urinary-type plasminogen activator-dependent tumor cell invasion and metastasis. May also play a non-inhibitory role in seminal plasma and urine as a hydrophobic hormone carrier by its binding to retinoic acid. This chain is Plasma serine protease inhibitor (SERPINA5), found in Homo sapiens (Human).